We begin with the raw amino-acid sequence, 488 residues long: Germacrene A hydroxylase (488 aa).

Residues 1–6 (MELSFT) lie on the Cytoplasmic side of the membrane. Residues 7–23 (TSIAVATIVFVLFKLAT) traverse the membrane as a helical; Signal-anchor for type II membrane protein segment. Over 24-488 (RPKSNKKLLP…KTHLVLVPSF (465 aa)) the chain is Lumenal. Residues Asn-255, Asn-260, and Asn-379 are each glycosylated (N-linked (GlcNAc...) asparagine). Cys-432 contacts heme.

Belongs to the cytochrome P450 family. Heme is required as a cofactor.

Its subcellular location is the endoplasmic reticulum membrane. The enzyme catalyses (+)-(R)-germacrene A + 3 reduced [NADPH--hemoprotein reductase] + 3 O2 = germacra-1(10),4,11(13)-trien-12-oate + 3 oxidized [NADPH--hemoprotein reductase] + 4 H2O + 4 H(+). It functions in the pathway secondary metabolite biosynthesis; terpenoid biosynthesis. Its function is as follows. Involved in the biosynthesis of germacrene-derived sesquiterpene lactones. Catalyzes three consecutive oxidations of germacrene A to produce germacrene A acid. Could also catalyze the three-step oxidation of non-natural substrate amorphadiene to artemisinic acid. The chain is Germacrene A hydroxylase from Saussurea costus (Costus).